Here is a 245-residue protein sequence, read N- to C-terminus: Tryptophan synthase alpha chain (245 aa).

Catalysis depends on proton acceptor residues Glu-35 and Asp-46.

It belongs to the TrpA family. In terms of assembly, tetramer of two alpha and two beta chains.

The catalysed reaction is (1S,2R)-1-C-(indol-3-yl)glycerol 3-phosphate + L-serine = D-glyceraldehyde 3-phosphate + L-tryptophan + H2O. The protein operates within amino-acid biosynthesis; L-tryptophan biosynthesis; L-tryptophan from chorismate: step 5/5. In terms of biological role, the alpha subunit is responsible for the aldol cleavage of indoleglycerol phosphate to indole and glyceraldehyde 3-phosphate. The protein is Tryptophan synthase alpha chain of Sulfurisphaera tokodaii (strain DSM 16993 / JCM 10545 / NBRC 100140 / 7) (Sulfolobus tokodaii).